We begin with the raw amino-acid sequence, 711 residues long: Consortin (711 aa).

Disordered stretches follow at residues 1-157 (MDDS…NDPP), 294-332 (AVGTEAAAKEPEIETCPSTDPSGDRHEEEPQESSPGCHQ), 370-389 (ETAGSRSGPAAASNACKDSS), 394-432 (PPTEDHCGVARDPKVAPPSESVAEQKLSTGDDGALPGLI), and 457-496 (PRDQPHSSEVAEPRQPDVTASDGKSAQSQAGLETGPESAL). Residues 1–650 (MDDSDPPTYS…LEQDEVGGGS (650 aa)) are Cytoplasmic-facing. The segment covering 63 to 77 (VSEQDSLNNNESFPS) has biased composition (polar residues). Residues 109–120 (PAKRSPRAKKSS) are compositionally biased toward basic residues. 2 stretches are compositionally biased toward basic and acidic residues: residues 396–407 (TEDHCGVARDPK) and 457–471 (PRDQPHSSEVAEPRQ). The span at 478 to 487 (DGKSAQSQAG) shows a compositional bias: polar residues. The chain crosses the membrane as a helical span at residues 651–671 (CILLILLCIATVFLSVGGTAL). Residues 672–711 (YCTLGNIESPVCTDFADNVDFYYTKLLQGVAGLKHWVYLS) are Extracellular-facing.

It belongs to the CNST family. As to quaternary structure, interacts with connexins GJA1/CX43, GJB1/CX32, GJB2/CX26, GJB3/CX31, GJB6/CX30 and GJC1/CX45. Also interacts with GGA1 and GGA2. Does not interact with PANX1.

It localises to the cell membrane. It is found in the golgi apparatus. Its subcellular location is the trans-Golgi network membrane. The protein resides in the cytoplasmic vesicle. The protein localises to the secretory vesicle. Required for targeting of connexins to the plasma membrane. This Mus musculus (Mouse) protein is Consortin (Cnst).